The primary structure comprises 462 residues: Retinoic acid receptor alpha (462 aa).

The interval 1-87 (MASNSSSCPT…PPPLPRIYKP (87 aa)) is modulating. A compositionally biased stretch (polar residues) spans 52–64 (GYSTPSPATIETQ). The segment at 52–77 (GYSTPSPATIETQSSSSEEIVPSPPS) is disordered. Position 77 is a phosphoserine; by CDK7 (Ser77). 2 consecutive NR C4-type zinc fingers follow at residues 88–108 (CFVCQDKSSGYHYGVSACEGC) and 124–148 (CHRDKNCIINKVTRNRCQYCRLQKC). A DNA-binding region (nuclear receptor) is located at residues 88-153 (CFVCQDKSSG…RLQKCFEVGM (66 aa)). At Ser96 the chain carries Phosphoserine; by PKB/AKT1. A hinge region spans residues 154–182 (SKESVRNDRNKKKKEVPKPECSESYTLTP). Residues Lys166 and Lys171 each participate in a glycyl lysine isopeptide (Lys-Gly) (interchain with G-Cter in SUMO) cross-link. Residues 183–417 (EVGELIEKVR…PLIQEMLENS (235 aa)) form the NR LBD domain. Residue Ser219 is modified to Phosphoserine; by PKA. Cys235 is an all-trans-retinoate binding site. The short motif at 254–258 (IADQI) is the UBR5-degron element. Ser287 contributes to the all-trans-retinoate binding site. The residue at position 369 (Ser369) is a Phosphoserine; by PKA. Lys399 is covalently cross-linked (Glycyl lysine isopeptide (Lys-Gly) (interchain with G-Cter in SUMO)). A required for binding corepressor NCOR1 region spans residues 404-419 (GSMPPLIQEMLENSEG). Residues 408 to 416 (PLIQEMLEN) carry the 9aaTAD motif. Positions 419–462 (GLDTLSGQPGGGGRDGGGLAPPPGSCSPSLSPSSNRSSPATHSP) are disordered. The span at 426–437 (QPGGGGRDGGGL) shows a compositional bias: gly residues. Low complexity predominate over residues 444–462 (CSPSLSPSSNRSSPATHSP).

Belongs to the nuclear hormone receptor family. NR1 subfamily. As to quaternary structure, heterodimer; with RXRA (via C-terminus); association with RXRA is enhanced by pulsatile shear stress. Binds DNA preferentially as a heterodimer. RXRA serves as enhancer to induce RARA binding to RARE. Interacts with RXRG. Interacts with coactivators NCOA3 and NCOA6. Interacts with NCOA7; the interaction requires ligand-binding. Interacts (via the ligand-binding domain) with PRAME; the interaction is ligand (retinoic acid)-dependent. Interacts with AKT1; the interaction phosphorylates RARA and represses transactivation. Interacts with PRKAR1A; the interaction negatively regulates RARA transcriptional activity. Interacts with NCOR1 and NCOR2. Interacts with PRMT2. Interacts with LRIF1. Interacts with ASXL1 and NCOA1. Interacts with ACTN4. In a complex with HDAC3, HDAC5 and HDAC7; the HDACs serve as corepressors of RARA, causing its deacetylation and inhibition of RARE DNA element binding; association with HDAC3, HDAC5 and HDAC7 is increased upon oscillatory shear stress. Interacts with CDK7. In the absence of hormonal ligand, interacts with TACC1. Phosphorylated on serine and threonine residues. Phosphorylation does not change during cell cycle. Phosphorylation on Ser-77 is crucial for transcriptional activity. Phosphorylation by AKT1 is required for the repressor activity but has no effect on DNA binding, protein stability nor subcellular localization. Phosphorylated by PKA in vitro. This phosphorylation on Ser-219 and Ser-369 is critical for ligand binding, nuclear localization and transcriptional activity in response to FSH signaling. In terms of processing, sumoylated with SUMO2, mainly on Lys-399 which is also required for SENP6 binding. On all-trans retinoic acid (ATRA) binding, a conformational change may occur that allows sumoylation on two additional site, Lys-166 and Lys-171. Probably desumoylated by SENP6. Sumoylation levels determine nuclear localization and regulate ATRA-mediated transcriptional activity. Post-translationally, trimethylation enhances heterodimerization with RXRA and positively modulates the transcriptional activation. Ubiquitinated by UBR5, leading to its degradation: UBR5 specifically recognizes and binds ligand-bound RARA when it is not associated with coactivators (NCOAs). In presence of NCOAs, the UBR5-degron is not accessible, preventing its ubiquitination and degradation. In terms of processing, acetylated; acetylation is increased upon pulsatile shear stress and decreased upon oscillatory shear stress. In terms of tissue distribution, expressed in monocytes.

The protein resides in the nucleus. It localises to the cytoplasm. Its function is as follows. Receptor for retinoic acid. Retinoic acid receptors bind as heterodimers to their target response elements in response to their ligands, all-trans or 9-cis retinoic acid, and regulate gene expression in various biological processes. The RXR/RAR heterodimers bind to the retinoic acid response elements (RARE) composed of tandem 5'-AGGTCA-3' sites known as DR1-DR5. In the absence of ligand, the RXR-RAR heterodimers associate with a multiprotein complex containing transcription corepressors that induce histone deacetylation, chromatin condensation and transcriptional suppression. On ligand binding, the corepressors dissociate from the receptors and associate with the coactivators leading to transcriptional activation. Formation of a complex with histone deacetylases might lead to inhibition of RARE DNA element binding and to transcriptional repression. Transcriptional activation and RARE DNA element binding might be supported by the transcription factor KLF2. RARA plays an essential role in the regulation of retinoic acid-induced germ cell development during spermatogenesis. Has a role in the survival of early spermatocytes at the beginning prophase of meiosis. In Sertoli cells, may promote the survival and development of early meiotic prophase spermatocytes. In concert with RARG, required for skeletal growth, matrix homeostasis and growth plate function. Together with RXRA, positively regulates microRNA-10a expression, thereby inhibiting the GATA6/VCAM1 signaling response to pulsatile shear stress in vascular endothelial cells. In association with HDAC3, HDAC5 and HDAC7 corepressors, plays a role in the repression of microRNA-10a and thereby promotes the inflammatory response. The polypeptide is Retinoic acid receptor alpha (RARA) (Homo sapiens (Human)).